A 172-amino-acid polypeptide reads, in one-letter code: RNA pyrophosphohydrolase (172 aa).

The Nudix hydrolase domain occupies 6-149 (GFRANVGIII…KRDVYRKVMK (144 aa)). The Nudix box signature appears at 38-59 (GGLDDGESVEEAMYRELYEEVG).

It belongs to the Nudix hydrolase family. RppH subfamily. It depends on a divalent metal cation as a cofactor.

Its function is as follows. Accelerates the degradation of transcripts by removing pyrophosphate from the 5'-end of triphosphorylated RNA, leading to a more labile monophosphorylated state that can stimulate subsequent ribonuclease cleavage. The polypeptide is RNA pyrophosphohydrolase (Shewanella frigidimarina (strain NCIMB 400)).